The primary structure comprises 53 residues: VQAVPPDVKGEEGKEEVEDMDGDDNAPTVAAFAILFILSFLYSTFVTVVKVQQ.

The tract at residues 1–25 (VQAVPPDVKGEEGKEEVEDMDGDDN) is disordered. The segment covering 13-24 (GKEEVEDMDGDD) has biased composition (acidic residues). A helical transmembrane segment spans residues 29–49 (VAAFAILFILSFLYSTFVTVV).

As to expression, expressed in the spleen, pancreas, peripheral blood lymphocytes and at low levels in the epigonal organ.

Its subcellular location is the membrane. The sequence is that of IgW transmembrane form Tm1T3/Tm6T3/Tm3C4 from Ginglymostoma cirratum (Nurse shark).